Consider the following 253-residue polypeptide: CTP:phosphoglutamine cytidylyltransferase (253 aa).

The catalysed reaction is N(5)-phospho-L-glutamine + CTP + H(+) = N(5)-(cytidine 5'-diphosphoramidyl)-L-glutamine + diphosphate. It participates in capsule biogenesis; capsule polysaccharide biosynthesis. Functionally, involved in the biosynthesis of the O-methyl phosphoramidate (MeOPN) group found on the capsular polysaccharide (CPS) of C.jejuni. Catalyzes the formation of CDP-L-glutamine from CTP and L-glutamine phosphate. In the presence of MnCTP, catalyzes the displacement of pyrophosphate from CTP using phosphoramidate, methyl phosphate, methyl phosphonate, phosphate, arsenate, ethanolamine phosphate, (R/S)-glycerol-1-phosphate, glycerol-2-phosphate, serinol phosphate, L-serine phosphate and 3-phospho-D-glycerate as substrate in addition to L-glutamine phosphate. This chain is CTP:phosphoglutamine cytidylyltransferase, found in Campylobacter jejuni subsp. jejuni serotype O:2 (strain ATCC 700819 / NCTC 11168).